Here is a 203-residue protein sequence, read N- to C-terminus: Pyridoxal 5'-phosphate synthase subunit PdxT (203 aa).

54-56 (GES) is a binding site for L-glutamine. The active-site Nucleophile is the Cys86. Residues Arg113 and 141–142 (IR) each bind L-glutamine. Catalysis depends on charge relay system residues His177 and Glu179.

The protein belongs to the glutaminase PdxT/SNO family. In the presence of PdxS, forms a dodecamer of heterodimers. Only shows activity in the heterodimer.

The catalysed reaction is aldehydo-D-ribose 5-phosphate + D-glyceraldehyde 3-phosphate + L-glutamine = pyridoxal 5'-phosphate + L-glutamate + phosphate + 3 H2O + H(+). The enzyme catalyses L-glutamine + H2O = L-glutamate + NH4(+). Its pathway is cofactor biosynthesis; pyridoxal 5'-phosphate biosynthesis. Functionally, catalyzes the hydrolysis of glutamine to glutamate and ammonia as part of the biosynthesis of pyridoxal 5'-phosphate. The resulting ammonia molecule is channeled to the active site of PdxS. The polypeptide is Pyridoxal 5'-phosphate synthase subunit PdxT (Halobacterium salinarum (strain ATCC 29341 / DSM 671 / R1)).